Reading from the N-terminus, the 76-residue chain is Sec-independent protein translocase protein TatA (76 aa).

A helical transmembrane segment spans residues 1 to 21 (MGSFSIWHWLIVLVIVMLVFG). 2 stretches are compositionally biased toward basic and acidic residues: residues 41-50 (DGMKDGEDKG) and 57-76 (KELR…SRQQ). The interval 41-76 (DGMKDGEDKGAQPAASKELRDSTTIDVDAKEKSRQQ) is disordered.

Belongs to the TatA/E family. The Tat system comprises two distinct complexes: a TatABC complex, containing multiple copies of TatA, TatB and TatC subunits, and a separate TatA complex, containing only TatA subunits. Substrates initially bind to the TatABC complex, which probably triggers association of the separate TatA complex to form the active translocon.

It is found in the cell inner membrane. Its function is as follows. Part of the twin-arginine translocation (Tat) system that transports large folded proteins containing a characteristic twin-arginine motif in their signal peptide across membranes. TatA could form the protein-conducting channel of the Tat system. This Cupriavidus taiwanensis (strain DSM 17343 / BCRC 17206 / CCUG 44338 / CIP 107171 / LMG 19424 / R1) (Ralstonia taiwanensis (strain LMG 19424)) protein is Sec-independent protein translocase protein TatA.